The following is a 608-amino-acid chain: Phosphogluconate dehydratase (608 aa).

2 residues coordinate [4Fe-4S] cluster: Cys-154 and Cys-221.

Belongs to the IlvD/Edd family. [4Fe-4S] cluster is required as a cofactor.

It carries out the reaction 6-phospho-D-gluconate = 2-dehydro-3-deoxy-6-phospho-D-gluconate + H2O. It functions in the pathway carbohydrate metabolism; Entner-Doudoroff pathway. In terms of biological role, catalyzes the dehydration of 6-phospho-D-gluconate to 2-dehydro-3-deoxy-6-phospho-D-gluconate. The polypeptide is Phosphogluconate dehydratase (Helicobacter pylori (strain J99 / ATCC 700824) (Campylobacter pylori J99)).